The following is a 107-amino-acid chain: MSTYRSPDRAWQALADGTRRAIVERLAHGPLAVGELARDLPVSRPAVSQHLKVLKTARLVCDRPAGTRRVYQLDPTGLAALRTDLDRFWTRALTGYAQLIDSEGDDT.

The 93-residue stretch at 1–93 (MSTYRSPDRA…DLDRFWTRAL (93 aa)) folds into the HTH arsR-type domain. The H-T-H motif DNA-binding region spans 33-56 (VGELARDLPVSRPAVSQHLKVLKT).

In terms of assembly, homodimer.

DNA-binding ability is not susceptible to zinc, nickel, cobalt, cadmium, lead, copper and manganese ions. Its function is as follows. Involved in the regulation of lipid metabolism and hypoxic response. Positively regulates transcription of various genes, such as phoP, groEL2 and dosR. Negatively regulates its own transcription. Acts by binding to a specific palindromic sequence motif in promoter regions. The protein is HTH-type transcriptional regulator Rv2034 of Mycobacterium tuberculosis (strain ATCC 25618 / H37Rv).